The chain runs to 403 residues: uncharacterized protein (403 aa).

Transmembrane regions (helical) follow at residues 29–49 (FVIF…CGFL) and 55–75 (AFIA…FFGC).

This sequence belongs to the chlamydial CPn_0129/CT_036/TC_0306 family.

Its subcellular location is the cell membrane. This is an uncharacterized protein from Chlamydia trachomatis serovar D (strain ATCC VR-885 / DSM 19411 / UW-3/Cx).